The sequence spans 303 residues: Sulfate adenylyltransferase subunit 2 (303 aa).

The protein belongs to the PAPS reductase family. CysD subfamily. Heterodimer composed of CysD, the smaller subunit, and CysN.

It catalyses the reaction sulfate + ATP + H(+) = adenosine 5'-phosphosulfate + diphosphate. The protein operates within sulfur metabolism; hydrogen sulfide biosynthesis; sulfite from sulfate: step 1/3. Its function is as follows. With CysN forms the ATP sulfurylase (ATPS) that catalyzes the adenylation of sulfate producing adenosine 5'-phosphosulfate (APS) and diphosphate, the first enzymatic step in sulfur assimilation pathway. APS synthesis involves the formation of a high-energy phosphoric-sulfuric acid anhydride bond driven by GTP hydrolysis by CysN coupled to ATP hydrolysis by CysD. This Akkermansia muciniphila (strain ATCC BAA-835 / DSM 22959 / JCM 33894 / BCRC 81048 / CCUG 64013 / CIP 107961 / Muc) protein is Sulfate adenylyltransferase subunit 2.